A 628-amino-acid polypeptide reads, in one-letter code: Biosynthetic arginine decarboxylase (628 aa).

Lys-99 bears the N6-(pyridoxal phosphate)lysine mark. A substrate-binding site is contributed by 279-289; it reads VDVGGGLGIDY.

Belongs to the Orn/Lys/Arg decarboxylase class-II family. SpeA subfamily. Mg(2+) serves as cofactor. It depends on pyridoxal 5'-phosphate as a cofactor.

The catalysed reaction is L-arginine + H(+) = agmatine + CO2. Catalyzes the biosynthesis of agmatine from arginine. The chain is Biosynthetic arginine decarboxylase from Xylella fastidiosa (strain 9a5c).